We begin with the raw amino-acid sequence, 343 residues long: Ferredoxin--NADP reductase (343 aa).

FAD contacts are provided by Asp36, Gln44, Tyr49, Val89, Phe124, Asp289, and Thr330.

This sequence belongs to the ferredoxin--NADP reductase type 2 family. In terms of assembly, homodimer. FAD is required as a cofactor.

The catalysed reaction is 2 reduced [2Fe-2S]-[ferredoxin] + NADP(+) + H(+) = 2 oxidized [2Fe-2S]-[ferredoxin] + NADPH. In Mesorhizobium japonicum (strain LMG 29417 / CECT 9101 / MAFF 303099) (Mesorhizobium loti (strain MAFF 303099)), this protein is Ferredoxin--NADP reductase.